Here is a 419-residue protein sequence, read N- to C-terminus: Tyrosine--tRNA ligase 2 (419 aa).

Y34 lines the L-tyrosine pocket. The short motif at 39–48 (PTGDSMHIGH) is the 'HIGH' region element. Y168 and Q172 together coordinate L-tyrosine. A 'KMSKS' region motif is present at residues 230–234 (KFGKS). K233 provides a ligand contact to ATP. Positions 352-418 (KNIVEWLVDL…GKKNYSLVKL (67 aa)) constitute an S4 RNA-binding domain.

It belongs to the class-I aminoacyl-tRNA synthetase family. TyrS type 1 subfamily. In terms of assembly, homodimer.

The protein resides in the cytoplasm. The enzyme catalyses tRNA(Tyr) + L-tyrosine + ATP = L-tyrosyl-tRNA(Tyr) + AMP + diphosphate + H(+). Its function is as follows. Catalyzes the attachment of tyrosine to tRNA(Tyr) in a two-step reaction: tyrosine is first activated by ATP to form Tyr-AMP and then transferred to the acceptor end of tRNA(Tyr). In Bacillus cereus (strain ATCC 10987 / NRS 248), this protein is Tyrosine--tRNA ligase 2.